Consider the following 297-residue polypeptide: MPFKDQLFLASQYLAPHHLVSRLMGRAADCRAPEIKNRMIARFVRRYNVDMSEALVEDPLAYASFNDFFTRALKPDARPLDDEPGAALCPADGAISQIGAIDNGRIFQAKGHSFGLTDLLGGDAERAAPFAGGQFATIYLSPRDYHRVHMPLAGTLREMVHVPGRLFSVNPLTARSVPELFARNERVACLFDTEHGPMALVLVGAMIVASIETVWAGLVTPHKRQVRSVRYDAAARAPIHLDKGAEMGRFKLGSTVIVLFGPKRLRWLDLPSVRGPVRMGETLALPASTAISFPESE.

Residues aspartate 92, histidine 149, and serine 254 each act as charge relay system; for autoendoproteolytic cleavage activity in the active site. Residue serine 254 is the Schiff-base intermediate with substrate; via pyruvic acid; for decarboxylase activity of the active site. Serine 254 is modified (pyruvic acid (Ser); by autocatalysis).

The protein belongs to the phosphatidylserine decarboxylase family. PSD-B subfamily. Prokaryotic type I sub-subfamily. In terms of assembly, heterodimer of a large membrane-associated beta subunit and a small pyruvoyl-containing alpha subunit. Pyruvate serves as cofactor. Post-translationally, is synthesized initially as an inactive proenzyme. Formation of the active enzyme involves a self-maturation process in which the active site pyruvoyl group is generated from an internal serine residue via an autocatalytic post-translational modification. Two non-identical subunits are generated from the proenzyme in this reaction, and the pyruvate is formed at the N-terminus of the alpha chain, which is derived from the carboxyl end of the proenzyme. The autoendoproteolytic cleavage occurs by a canonical serine protease mechanism, in which the side chain hydroxyl group of the serine supplies its oxygen atom to form the C-terminus of the beta chain, while the remainder of the serine residue undergoes an oxidative deamination to produce ammonia and the pyruvoyl prosthetic group on the alpha chain. During this reaction, the Ser that is part of the protease active site of the proenzyme becomes the pyruvoyl prosthetic group, which constitutes an essential element of the active site of the mature decarboxylase.

The protein resides in the cell membrane. It catalyses the reaction a 1,2-diacyl-sn-glycero-3-phospho-L-serine + H(+) = a 1,2-diacyl-sn-glycero-3-phosphoethanolamine + CO2. It functions in the pathway phospholipid metabolism; phosphatidylethanolamine biosynthesis; phosphatidylethanolamine from CDP-diacylglycerol: step 2/2. Its function is as follows. Catalyzes the formation of phosphatidylethanolamine (PtdEtn) from phosphatidylserine (PtdSer). This is Phosphatidylserine decarboxylase proenzyme from Bordetella bronchiseptica (strain ATCC BAA-588 / NCTC 13252 / RB50) (Alcaligenes bronchisepticus).